Here is a 687-residue protein sequence, read N- to C-terminus: Outer dynein arm-docking complex subunit 1 (687 aa).

Coiled coils occupy residues Gln100 to Val193, Arg222 to Lys267, and Ile341 to Arg421. Residues Ser126–Lys147 are disordered. Disordered regions lie at residues Val363 to Asp388, Phe487 to Asp511, and Glu540 to Tyr687. Residues Arg366–Asp388 are compositionally biased toward basic and acidic residues. Low complexity predominate over residues Ser544–Ser556. 2 stretches are compositionally biased toward polar residues: residues Arg557–Gly611 and Arg620–Gly629. Residues Ser660–Ser680 are compositionally biased toward low complexity.

Belongs to the ODA1/DCC2 family. As to quaternary structure, component of the outer dynein arm-docking complex along with ODAD2, ODAD3, ODAD4 and CLXN. Interacts with ODAD3. Interacts with ODAD4; this interaction may facilitate the recruitment and/or attachment of outer dynein arm docking complex proteins, including ODAD1, ODAD3, and ODAD4 to ciliary axonemes. Interacts with DNAH9. Interacts with MNS1. Interacts with PIERCE1 and PIERCE2; the interactions link the outer dynein arms docking complex (ODA-DC) to the internal microtubule inner proteins (MIP) in cilium axoneme. In terms of tissue distribution, expressed in trachea multiciliated cells.

It is found in the cytoplasm. The protein resides in the cytoskeleton. Its subcellular location is the cilium axoneme. Functionally, component of the outer dynein arm-docking complex (ODA-DC) that mediates outer dynein arms (ODA) binding onto the doublet microtubule. Involved in mediating assembly of both ODAs and their axonemal docking complex onto ciliary microtubules. This chain is Outer dynein arm-docking complex subunit 1 (ODAD1), found in Bos taurus (Bovine).